A 77-amino-acid polypeptide reads, in one-letter code: Conotoxin CaHr91 (77 aa).

An N-terminal signal peptide occupies residues 1–19; sequence MKLTCALIITVLFLSITAD. Residues 20 to 43 constitute a propeptide that is removed on maturation; that stretch reads DSRGKQGYRALKSIAGMLNSKTVR. 3 disulfide bridges follow: cysteine 45–cysteine 60, cysteine 52–cysteine 65, and cysteine 59–cysteine 74.

It belongs to the conotoxin O1 superfamily. As to expression, expressed by the venom duct.

It is found in the secreted. This is Conotoxin CaHr91 from Conus capitaneus (Captain cone).